The sequence spans 185 residues: MPVMPDQWIKSKALESRMIEPFVSSKISTGVISYGLSSYGYDARVSNKFKIFTNLAVSQVDPKNFDESMLIERTGDFCIIPPNSFALGCTIEYFRVPRGVIVICLGKSTYARCGIIVNVTPLEPEWEGHVTLEFSNTTPLPAKIYSNEGVCQMIFLKGSTNCDVSYKDAKGKYMGQAGITLPIVK.

DCTP contacts are provided by residues K107–R112, T131–E133, Q152, Y166, and Q176. The active-site Proton donor/acceptor is the E133.

It belongs to the dCTP deaminase family. As to quaternary structure, homotrimer.

It catalyses the reaction dCTP + H2O + H(+) = dUTP + NH4(+). It functions in the pathway pyrimidine metabolism; dUMP biosynthesis; dUMP from dCTP (dUTP route): step 1/2. Catalyzes the deamination of dCTP to dUTP. This Neorickettsia sennetsu (strain ATCC VR-367 / Miyayama) (Ehrlichia sennetsu) protein is dCTP deaminase.